Reading from the N-terminus, the 473-residue chain is Glutamate--tRNA ligase (473 aa).

Residues 9–19 carry the 'HIGH' region motif; sequence PSPTGYLHVGG. Zn(2+) is bound by residues C98, C100, C125, and D127. A 'KMSKS' region motif is present at residues 237–241; sequence KLSKR. Residue K240 participates in ATP binding.

This sequence belongs to the class-I aminoacyl-tRNA synthetase family. Glutamate--tRNA ligase type 1 subfamily. In terms of assembly, monomer. The cofactor is Zn(2+).

Its subcellular location is the cytoplasm. The enzyme catalyses tRNA(Glu) + L-glutamate + ATP = L-glutamyl-tRNA(Glu) + AMP + diphosphate. Catalyzes the attachment of glutamate to tRNA(Glu) in a two-step reaction: glutamate is first activated by ATP to form Glu-AMP and then transferred to the acceptor end of tRNA(Glu). The sequence is that of Glutamate--tRNA ligase from Sodalis glossinidius (strain morsitans).